Here is a 175-residue protein sequence, read N- to C-terminus: MPRPDKAAVVAELKEEFQTSSGAVLTEYRGLTVAQLTELRRSLGQNARFRVAKNTLTKIAAKEAGVTDSEVLDLLKGPSAIAFVKGDVVEAAKGLRDFAKENAALVIKGGLIDGKPMTPEEITKLADLESREVLLSKLAGAFKAKQSQAAAVFQALPSKAVRLVQALADKRGESQ.

It belongs to the universal ribosomal protein uL10 family. As to quaternary structure, part of the ribosomal stalk of the 50S ribosomal subunit. The N-terminus interacts with L11 and the large rRNA to form the base of the stalk. The C-terminus forms an elongated spine to which L12 dimers bind in a sequential fashion forming a multimeric L10(L12)X complex.

Its function is as follows. Forms part of the ribosomal stalk, playing a central role in the interaction of the ribosome with GTP-bound translation factors. This chain is Large ribosomal subunit protein uL10, found in Thermobifida fusca (strain YX).